The chain runs to 378 residues: Ribosomal RNA large subunit methyltransferase G (378 aa).

Belongs to the methyltransferase superfamily. RlmG family.

The protein resides in the cytoplasm. The enzyme catalyses guanosine(1835) in 23S rRNA + S-adenosyl-L-methionine = N(2)-methylguanosine(1835) in 23S rRNA + S-adenosyl-L-homocysteine + H(+). Its function is as follows. Specifically methylates the guanine in position 1835 (m2G1835) of 23S rRNA. This Shewanella baltica (strain OS195) protein is Ribosomal RNA large subunit methyltransferase G.